We begin with the raw amino-acid sequence, 179 residues long: Protein YjaZ (179 aa).

This chain is Protein YjaZ, found in Escherichia coli (strain K12).